We begin with the raw amino-acid sequence, 474 residues long: Trigger factor (474 aa).

The region spanning Gly165–Leu250 is the PPIase FKBP-type domain. Basic and acidic residues predominate over residues Val451–Lys467. The tract at residues Val451–Val474 is disordered.

The protein belongs to the FKBP-type PPIase family. Tig subfamily.

It is found in the cytoplasm. The catalysed reaction is [protein]-peptidylproline (omega=180) = [protein]-peptidylproline (omega=0). Involved in protein export. Acts as a chaperone by maintaining the newly synthesized protein in an open conformation. Functions as a peptidyl-prolyl cis-trans isomerase. This chain is Trigger factor, found in Bartonella bacilliformis (strain ATCC 35685 / KC583 / Herrer 020/F12,63).